The chain runs to 321 residues: Glucokinase (321 aa).

An ATP-binding site is contributed by 10 to 15 (GDIGGT).

The protein belongs to the bacterial glucokinase family.

The protein localises to the cytoplasm. It carries out the reaction D-glucose + ATP = D-glucose 6-phosphate + ADP + H(+). In Marinobacter nauticus (strain ATCC 700491 / DSM 11845 / VT8) (Marinobacter aquaeolei), this protein is Glucokinase.